The primary structure comprises 233 residues: 3-dehydroquinate dehydratase (233 aa).

3-dehydroquinate contacts are provided by residues 39–41 (EIR) and Arg-73. His-132 serves as the catalytic Proton donor/acceptor. Lys-159 serves as the catalytic Schiff-base intermediate with substrate. Arg-196 and Gln-219 together coordinate 3-dehydroquinate.

It belongs to the type-I 3-dehydroquinase family. As to quaternary structure, homodimer.

The enzyme catalyses 3-dehydroquinate = 3-dehydroshikimate + H2O. The protein operates within metabolic intermediate biosynthesis; chorismate biosynthesis; chorismate from D-erythrose 4-phosphate and phosphoenolpyruvate: step 3/7. Its function is as follows. Involved in the third step of the chorismate pathway, which leads to the biosynthesis of aromatic amino acids. Catalyzes the cis-dehydration of 3-dehydroquinate (DHQ) and introduces the first double bond of the aromatic ring to yield 3-dehydroshikimate. This is 3-dehydroquinate dehydratase from Methanococcoides burtonii (strain DSM 6242 / NBRC 107633 / OCM 468 / ACE-M).